We begin with the raw amino-acid sequence, 399 residues long: Acetate kinase (399 aa).

Mg(2+) is bound at residue Asn7. Lys14 contributes to the ATP binding site. A substrate-binding site is contributed by Arg91. Catalysis depends on Asp148, which acts as the Proton donor/acceptor. ATP is bound by residues 208–212, 283–285, and 331–335; these read HLGNG, DFR, and GLGEN. Glu384 contributes to the Mg(2+) binding site.

Belongs to the acetokinase family. As to quaternary structure, homodimer. It depends on Mg(2+) as a cofactor. The cofactor is Mn(2+).

It localises to the cytoplasm. It catalyses the reaction acetate + ATP = acetyl phosphate + ADP. The protein operates within metabolic intermediate biosynthesis; acetyl-CoA biosynthesis; acetyl-CoA from acetate: step 1/2. In terms of biological role, catalyzes the formation of acetyl phosphate from acetate and ATP. Can also catalyze the reverse reaction. This Desulfitobacterium hafniense (strain Y51) protein is Acetate kinase.